Reading from the N-terminus, the 386-residue chain is 4-hydroxy-3-methylbut-2-en-1-yl diphosphate synthase (flavodoxin) (386 aa).

The [4Fe-4S] cluster site is built by C281, C284, C316, and E323.

The protein belongs to the IspG family. Requires [4Fe-4S] cluster as cofactor.

The catalysed reaction is (2E)-4-hydroxy-3-methylbut-2-enyl diphosphate + oxidized [flavodoxin] + H2O + 2 H(+) = 2-C-methyl-D-erythritol 2,4-cyclic diphosphate + reduced [flavodoxin]. It functions in the pathway isoprenoid biosynthesis; isopentenyl diphosphate biosynthesis via DXP pathway; isopentenyl diphosphate from 1-deoxy-D-xylulose 5-phosphate: step 5/6. Converts 2C-methyl-D-erythritol 2,4-cyclodiphosphate (ME-2,4cPP) into 1-hydroxy-2-methyl-2-(E)-butenyl 4-diphosphate. This Corynebacterium jeikeium (strain K411) protein is 4-hydroxy-3-methylbut-2-en-1-yl diphosphate synthase (flavodoxin).